The primary structure comprises 306 residues: Dirigent protein 24 (306 aa).

The first 21 residues, 1–21 (MAKALSLTIFLFLLIASNVQS), serve as a signal peptide directing secretion. The disordered stretch occupies residues 36 to 61 (PQVPEEEDDSPQAVTTTPTPIPLPGP).

It belongs to the plant dirigent protein family. Homodimer.

The protein resides in the secreted. The protein localises to the extracellular space. It localises to the apoplast. Dirigent proteins impart stereoselectivity on the phenoxy radical-coupling reaction, yielding optically active lignans from two molecules of coniferyl alcohol in the biosynthesis of lignans, flavonolignans, and alkaloids and thus plays a central role in plant secondary metabolism. This Arabidopsis thaliana (Mouse-ear cress) protein is Dirigent protein 24 (DIR24).